We begin with the raw amino-acid sequence, 576 residues long: Malonate--CoA ligase ACSF3, mitochondrial (576 aa).

The N-terminal 83 residues, 1-83, are a transit peptide targeting the mitochondrion; sequence MLPHVVLTFR…RSLRLSQEIC (83 aa). ATP-binding positions include 202-210, Asp-457, Arg-471, and Lys-563; that span reads TSGTTGRPK.

The protein belongs to the ATP-dependent AMP-binding enzyme family.

The protein localises to the mitochondrion. It carries out the reaction tetracosanoate + ATP + CoA = tetracosanoyl-CoA + AMP + diphosphate. The enzyme catalyses malonate + ATP + CoA = malonyl-CoA + AMP + diphosphate. In terms of biological role, catalyzes the initial reaction in intramitochondrial fatty acid synthesis, by activating malonate and methylmalonate, but not acetate, into their respective CoA thioester. May have some preference toward very-long-chain substrates. This chain is Malonate--CoA ligase ACSF3, mitochondrial, found in Homo sapiens (Human).